A 651-amino-acid polypeptide reads, in one-letter code: Threonine--tRNA ligase (651 aa).

Positions 1–61 (MIKITFPDNS…NDDATVKLLK (61 aa)) constitute a TGS domain. The segment at 242–541 (DHRKIGKEMD…LIEHTAGKFP (300 aa)) is catalytic. C337, H388, and H518 together coordinate Zn(2+).

It belongs to the class-II aminoacyl-tRNA synthetase family. As to quaternary structure, homodimer. The cofactor is Zn(2+).

The protein resides in the cytoplasm. It carries out the reaction tRNA(Thr) + L-threonine + ATP = L-threonyl-tRNA(Thr) + AMP + diphosphate + H(+). Catalyzes the attachment of threonine to tRNA(Thr) in a two-step reaction: L-threonine is first activated by ATP to form Thr-AMP and then transferred to the acceptor end of tRNA(Thr). Also edits incorrectly charged L-seryl-tRNA(Thr). The polypeptide is Threonine--tRNA ligase (Parabacteroides distasonis (strain ATCC 8503 / DSM 20701 / CIP 104284 / JCM 5825 / NCTC 11152)).